A 90-amino-acid polypeptide reads, in one-letter code: Putative septation protein SpoVG (90 aa).

It belongs to the SpoVG family.

In terms of biological role, could be involved in septation. The sequence is that of Putative septation protein SpoVG from Clostridium perfringens (strain ATCC 13124 / DSM 756 / JCM 1290 / NCIMB 6125 / NCTC 8237 / Type A).